The following is a 171-amino-acid chain: 3-hydroxydecanoyl-[acyl-carrier-protein] dehydratase (171 aa).

H70 is a catalytic residue.

It belongs to the thioester dehydratase family. FabA subfamily. Homodimer.

The protein resides in the cytoplasm. The catalysed reaction is a (3R)-hydroxyacyl-[ACP] = a (2E)-enoyl-[ACP] + H2O. It carries out the reaction (3R)-hydroxydecanoyl-[ACP] = (2E)-decenoyl-[ACP] + H2O. It catalyses the reaction (2E)-decenoyl-[ACP] = (3Z)-decenoyl-[ACP]. The protein operates within lipid metabolism; fatty acid biosynthesis. Functionally, necessary for the introduction of cis unsaturation into fatty acids. Catalyzes the dehydration of (3R)-3-hydroxydecanoyl-ACP to E-(2)-decenoyl-ACP and then its isomerization to Z-(3)-decenoyl-ACP. Can catalyze the dehydratase reaction for beta-hydroxyacyl-ACPs with saturated chain lengths up to 16:0, being most active on intermediate chain length. In Stutzerimonas stutzeri (strain A1501) (Pseudomonas stutzeri), this protein is 3-hydroxydecanoyl-[acyl-carrier-protein] dehydratase.